Reading from the N-terminus, the 425-residue chain is Lipoyl synthase, mitochondrial (425 aa).

Residues 1 to 33 constitute a mitochondrion transit peptide; sequence MAASSTRLRCLYASSSTWKTSPSQSLISLSRRY. Residues 17–55 form a disordered region; the sequence is TWKTSPSQSLISLSRRYATTSSAPPTPSDESSSTLPKRR. Over residues 33 to 51 the composition is skewed to polar residues; it reads YATTSSAPPTPSDESSSTL. Residues cysteine 142, cysteine 147, cysteine 153, cysteine 173, cysteine 177, cysteine 180, and serine 388 each contribute to the [4Fe-4S] cluster site. Positions 156 to 377 constitute a Radical SAM core domain; the sequence is GSDKSAATAT…RQRALEMGFL (222 aa).

Belongs to the radical SAM superfamily. Lipoyl synthase family. [4Fe-4S] cluster is required as a cofactor.

Its subcellular location is the mitochondrion. It carries out the reaction [[Fe-S] cluster scaffold protein carrying a second [4Fe-4S](2+) cluster] + N(6)-octanoyl-L-lysyl-[protein] + 2 oxidized [2Fe-2S]-[ferredoxin] + 2 S-adenosyl-L-methionine + 4 H(+) = [[Fe-S] cluster scaffold protein] + N(6)-[(R)-dihydrolipoyl]-L-lysyl-[protein] + 4 Fe(3+) + 2 hydrogen sulfide + 2 5'-deoxyadenosine + 2 L-methionine + 2 reduced [2Fe-2S]-[ferredoxin]. It participates in protein modification; protein lipoylation via endogenous pathway; protein N(6)-(lipoyl)lysine from octanoyl-[acyl-carrier-protein]: step 2/2. In terms of biological role, catalyzes the radical-mediated insertion of two sulfur atoms into the C-6 and C-8 positions of the octanoyl moiety bound to the lipoyl domains of lipoate-dependent enzymes, thereby converting the octanoylated domains into lipoylated derivatives. In Talaromyces marneffei (strain ATCC 18224 / CBS 334.59 / QM 7333) (Penicillium marneffei), this protein is Lipoyl synthase, mitochondrial.